We begin with the raw amino-acid sequence, 547 residues long: Agglutinin-1 (547 aa).

An N-terminal signal peptide occupies residues 1–20 (MKFETTKNKLHGNAYYQAQF). Glutamine 21 bears the Pyrrolidone carboxylic acid mark. Glutamate 183 is a catalytic residue. 3 disulfide bridges follow: cysteine 266–cysteine 288, cysteine 305–cysteine 324, and cysteine 348–cysteine 365. The propeptide at 279–280 (RS) is linker peptide. The Ricin B-type lectin 1 domain maps to 292–419 (YEPTVRIGGR…YRMRQGWRTG (128 aa)). Residues 302-344 (DGLCVDVSDNAYNNGNPIILWKCKDQLEVNQLWTLKSDKTIRS) form a 1-alpha repeat. The 1-beta repeat unit spans residues 345-385 (KGKCLTTYGYAPGNYVMIYDCSSAVAEATYWDIWDNGTIIN). N-linked (GlcNAc...) asparagine glycans are attached at residues asparagine 380 and asparagine 420. The 1-gamma repeat unit spans residues 388–420 (SGLVLSAESSSMGGTLTVQKNDYRMRQGWRTGN). The 125-residue stretch at 422 to 546 (TSPFVTSIAG…GNANQMWATL (125 aa)) folds into the Ricin B-type lectin 2 domain. Residues 433 to 468 (FKLCMEAHGNSMWLDVCDITKEEQQWAVYPDGSIRP) form a 2-alpha repeat. 2 cysteine pairs are disulfide-bonded: cysteine 436–cysteine 449 and cysteine 475–cysteine 492. A 2-beta repeat occupies 472 to 511 (TNNCLTCEEHKQGATIVMMGCSNAWASQRWVFKSDGTIYN). The stretch at 514–547 (DDMVMDVKSSDPSLKQIILWPYTGNANQMWATLF) is one 2-gamma repeat.

In the N-terminal section; belongs to the ribosome-inactivating protein family. Type 2 RIP subfamily. As to quaternary structure, heterotetramer of two A and two B chains.

It carries out the reaction Endohydrolysis of the N-glycosidic bond at one specific adenosine on the 28S rRNA.. In terms of biological role, the A chain is responsible for inhibiting protein synthesis through the catalytic inactivation of 60S ribosomal subunits by removing adenine from position 4,324 of 28S rRNA. Less toxic than abrin-a. Its function is as follows. The B chain is a galactose-specific lectin that facilitates the binding to the cell membrane that precedes endocytosis. This Abrus precatorius (Indian licorice) protein is Agglutinin-1.